The primary structure comprises 174 residues: Probable E3 ubiquitin-protein ligase RHA4A (174 aa).

An RING-type; atypical zinc finger spans residues 105–147; sequence CCVCLGEFELKEELVEMPLCKHIFHLDCIHLWLYSHNTCPLCR. Residues 155–174 form a disordered region; the sequence is TKTSVDDDNDHPDSPQTSPV.

In terms of tissue distribution, expressed in stems, flowers, cauline leaves and roots.

The catalysed reaction is S-ubiquitinyl-[E2 ubiquitin-conjugating enzyme]-L-cysteine + [acceptor protein]-L-lysine = [E2 ubiquitin-conjugating enzyme]-L-cysteine + N(6)-ubiquitinyl-[acceptor protein]-L-lysine.. The protein operates within protein modification; protein ubiquitination. Functionally, probable E3 ubiquitin-protein ligase that may possess E3 ubiquitin ligase activity in vitro. This chain is Probable E3 ubiquitin-protein ligase RHA4A, found in Arabidopsis thaliana (Mouse-ear cress).